Consider the following 362-residue polypeptide: Shewanella-like protein phosphatase 1 (362 aa).

The N-terminal stretch at 1–23 (MIFKKALYILLFLYIAIVKKGES) is a signal peptide. Mn(2+)-binding residues include aspartate 65, histidine 67, aspartate 101, and asparagine 136. The active-site Proton donor is histidine 137. Histidine 196 contributes to the Mn(2+) binding site.

This sequence belongs to the metallophosphoesterase superfamily. SLP family. It depends on Mn(2+) as a cofactor.

Functionally, phosphatase which plays an essential role in the development and differentiation of the ookinete and in the formation of ookinete micronemes. This Plasmodium berghei (strain Anka) protein is Shewanella-like protein phosphatase 1.